Reading from the N-terminus, the 146-residue chain is Cytochrome c' (146 aa).

Residues 1 to 21 form the signal peptide; sequence MKLRIATIAGLVVLGSGFAVA. 6 residues coordinate heme c: Arg-29, Thr-86, Ala-87, Cys-134, Cys-137, and His-138.

In terms of assembly, monomer. In terms of processing, binds 1 heme c group covalently per subunit.

Functionally, cytochrome c' is the most widely occurring bacterial c-type cytochrome. Cytochromes c' are high-spin proteins and the heme has no sixth ligand. Their exact function is not known. This Rhodopseudomonas palustris (strain ATCC BAA-98 / CGA009) protein is Cytochrome c' (cycA).